A 151-amino-acid chain; its full sequence is Large ribosomal subunit protein bL9 (151 aa).

It belongs to the bacterial ribosomal protein bL9 family.

Functionally, binds to the 23S rRNA. The chain is Large ribosomal subunit protein bL9 from Thermosipho africanus (strain TCF52B).